The following is a 194-amino-acid chain: Imidazoleglycerol-phosphate dehydratase (194 aa).

This sequence belongs to the imidazoleglycerol-phosphate dehydratase family.

It localises to the cytoplasm. It catalyses the reaction D-erythro-1-(imidazol-4-yl)glycerol 3-phosphate = 3-(imidazol-4-yl)-2-oxopropyl phosphate + H2O. The protein operates within amino-acid biosynthesis; L-histidine biosynthesis; L-histidine from 5-phospho-alpha-D-ribose 1-diphosphate: step 6/9. The polypeptide is Imidazoleglycerol-phosphate dehydratase (Thermus thermophilus (strain ATCC BAA-163 / DSM 7039 / HB27)).